The chain runs to 364 residues: MTDVTGAPADVLHTLFHSDQGGHEQVVLCQDRASGLKAVIALHSTALGPALGGTRFYPYANEAEAVADALNLARGMSYKNAMAGLEHGGGKAVIIGDPEQIKSEELLLAYGRFVASLGGRYVTACDVGTYVADMDVVARECRWTTGRSPENGGAGDSSVLTSFGVYQGMRAAAQHLWGDPTLRDRTVGIAGVGKVGHHLVEHLLAEGAHVVVTDVRKDVVRSLTERHPSVVAVADTDALIRVENLDIYAPCALGGALNDETVPVLTAKVVCGAANNQLAHPGVEKDLADRGILYAPDYVVNAGGVIQVADELHGFDFDRCKAKAAKIYDTTLAIFARAKEDGIPPAAAADRIAEQRMAEARARR.

Lys91 is a catalytic residue. 191 to 197 provides a ligand contact to NAD(+); sequence GVGKVGH.

Belongs to the Glu/Leu/Phe/Val dehydrogenases family. In terms of assembly, homodimer.

The protein resides in the cytoplasm. The enzyme catalyses L-valine + NAD(+) + H2O = 3-methyl-2-oxobutanoate + NH4(+) + NADH + H(+). It functions in the pathway amino-acid degradation; L-valine degradation. Its activity is regulated as follows. Inhibited by pyridoxal 5'-phosphate (PLP). Its function is as follows. Oxidative deamination of branched-chain amino acids. Oxidizes L-valine and L-alpha-aminobutyric acid efficiently, and L-alanine and L-isoleucine less efficiently. D-valine and L-glutamate were not substrates for the enzyme. The catabolism of valine is the major source of fatty acid precursors for macrolide biosynthesis and a vital source of antibiotic precursors. The polypeptide is Valine dehydrogenase (Streptomyces albus (strain ATCC 21838 / DSM 41398 / FERM P-419 / JCM 4703 / NBRC 107858)).